The primary structure comprises 186 residues: Large ribosomal subunit protein uL22 (186 aa).

The segment at 159–186 (KAAENEPAKKKLSKKKLQRQKEKMMRNE) is disordered. Basic and acidic residues predominate over residues 177-186 (RQKEKMMRNE).

This sequence belongs to the universal ribosomal protein uL22 family.

The protein is Large ribosomal subunit protein uL22 (RpL17) of Aedes albopictus (Asian tiger mosquito).